The primary structure comprises 258 residues: Imidazole glycerol phosphate synthase subunit HisF (258 aa).

Active-site residues include aspartate 11 and aspartate 130.

This sequence belongs to the HisA/HisF family. Heterodimer of HisH and HisF.

It localises to the cytoplasm. It carries out the reaction 5-[(5-phospho-1-deoxy-D-ribulos-1-ylimino)methylamino]-1-(5-phospho-beta-D-ribosyl)imidazole-4-carboxamide + L-glutamine = D-erythro-1-(imidazol-4-yl)glycerol 3-phosphate + 5-amino-1-(5-phospho-beta-D-ribosyl)imidazole-4-carboxamide + L-glutamate + H(+). The protein operates within amino-acid biosynthesis; L-histidine biosynthesis; L-histidine from 5-phospho-alpha-D-ribose 1-diphosphate: step 5/9. IGPS catalyzes the conversion of PRFAR and glutamine to IGP, AICAR and glutamate. The HisF subunit catalyzes the cyclization activity that produces IGP and AICAR from PRFAR using the ammonia provided by the HisH subunit. The protein is Imidazole glycerol phosphate synthase subunit HisF of Shigella flexneri serotype 5b (strain 8401).